Consider the following 202-residue polypeptide: uncharacterized protein (202 aa).

The next 3 membrane-spanning stretches (helical) occupy residues 34-54, 102-122, and 125-145; these read AAYVISNTIIFGVYAIIQARI, MGVAIMAFMHLYMGYAQPLVI, and ILPLISLFTNNLVSIYIFNKA. The disordered stretch occupies residues 165 to 202; it reads NKPAAAVTGTSSNSNNASAKSDGPTITELNENETEKSS. Low complexity predominate over residues 168–185; it reads AAAVTGTSSNSNNASAKS. Residues Ser-185 and Ser-201 each carry the phosphoserine modification.

The protein belongs to the PHO88 family.

It is found in the endoplasmic reticulum membrane. This is an uncharacterized protein from Schizosaccharomyces pombe (strain 972 / ATCC 24843) (Fission yeast).